Reading from the N-terminus, the 345-residue chain is S-adenosylmethionine:tRNA ribosyltransferase-isomerase (345 aa).

Belongs to the QueA family. Monomer.

The protein resides in the cytoplasm. It carries out the reaction 7-aminomethyl-7-carbaguanosine(34) in tRNA + S-adenosyl-L-methionine = epoxyqueuosine(34) in tRNA + adenine + L-methionine + 2 H(+). It participates in tRNA modification; tRNA-queuosine biosynthesis. In terms of biological role, transfers and isomerizes the ribose moiety from AdoMet to the 7-aminomethyl group of 7-deazaguanine (preQ1-tRNA) to give epoxyqueuosine (oQ-tRNA). The polypeptide is S-adenosylmethionine:tRNA ribosyltransferase-isomerase (Acidithiobacillus ferrooxidans (strain ATCC 53993 / BNL-5-31) (Leptospirillum ferrooxidans (ATCC 53993))).